The primary structure comprises 179 residues: uncharacterized protein (179 aa).

A Rhodanese domain is found at 21-109; that stretch reads QQDAVILVDV…WKQAGLPTVK (89 aa). The next 2 helical transmembrane spans lie at 115 to 135 and 138 to 158; these read ISIM…GVLL and FVAP…LFAG.

The protein resides in the cell membrane. This is an uncharacterized protein from Synechocystis sp. (strain ATCC 27184 / PCC 6803 / Kazusa).